Consider the following 442-residue polypeptide: Adenylosuccinate synthetase (442 aa).

GTP contacts are provided by residues 25 to 31, 53 to 55, and Lys62; these read GDEGKGK and GHT. The active-site Proton acceptor is the Asp26. Residues Asp26 and Gly53 each coordinate Mg(2+). Residues 26–29 and 51–54 contribute to the IMP site; these read DEGK and NAGH. His54 functions as the Proton donor in the catalytic mechanism. 4 residues coordinate IMP: Thr141, Arg155, Asn232, and Thr247. Thr307 provides a ligand contact to GTP. 307 to 313 contacts substrate; sequence TTTKRPR. An IMP-binding site is contributed by Arg311. Residues Arg313, 339–341, and 425–427 contribute to the GTP site; these read KLD and GVG.

The protein belongs to the adenylosuccinate synthetase family. Homodimer. It depends on Mg(2+) as a cofactor.

The protein resides in the cytoplasm. It catalyses the reaction IMP + L-aspartate + GTP = N(6)-(1,2-dicarboxyethyl)-AMP + GDP + phosphate + 2 H(+). The protein operates within purine metabolism; AMP biosynthesis via de novo pathway; AMP from IMP: step 1/2. Functionally, plays an important role in the salvage pathway for purine nucleotide biosynthesis. Catalyzes the first committed step in the biosynthesis of AMP from IMP. This chain is Adenylosuccinate synthetase (Adss), found in Plasmodium falciparum (isolate 3D7).